The following is a 498-amino-acid chain: Guanosine-5'-triphosphate,3'-diphosphate pyrophosphatase (498 aa).

The protein belongs to the GppA/Ppx family. GppA subfamily.

The enzyme catalyses guanosine 3'-diphosphate 5'-triphosphate + H2O = guanosine 3',5'-bis(diphosphate) + phosphate + H(+). Its pathway is purine metabolism; ppGpp biosynthesis; ppGpp from GTP: step 2/2. In terms of biological role, catalyzes the conversion of pppGpp to ppGpp. Guanosine pentaphosphate (pppGpp) is a cytoplasmic signaling molecule which together with ppGpp controls the 'stringent response', an adaptive process that allows bacteria to respond to amino acid starvation, resulting in the coordinated regulation of numerous cellular activities. In Yersinia pseudotuberculosis serotype O:1b (strain IP 31758), this protein is Guanosine-5'-triphosphate,3'-diphosphate pyrophosphatase.